We begin with the raw amino-acid sequence, 347 residues long: MPAPQCASCHKARAALRRPRSGQALCGSCFCAAFEAEVLHTVVAGRLLPPGAVVAVGASGGKDSTVLAHVLRELAPRLGISLHLVAVDEGIGGYRDAALAAVRRQAARWELPLTVVAYADLFGGWTMDAVARSTAGSGRSRACCTFCGVLRRRALEEGARLVGATHVVTGHNADDMAETVLMNFLRGDAGRLARGGGLGSPGEGGALPRCRPLQLASQKEVVLYAHFRRLDYFSEECVYAPEAFRGHARDLLKMLEAARPSAVLDLVHSAERLALAPTARPPPPGACSRCGALASRALCQACALLDGLNRGRPRLAIGKGRRGLDEEGPPREPQPSRPLTSEPVPDF.

Position 200 is a phosphoserine (Ser-200). Positions 315–347 are disordered; it reads LAIGKGRRGLDEEGPPREPQPSRPLTSEPVPDF.

It belongs to the TtcA family. CTU1/NCS6/ATPBD3 subfamily. In terms of assembly, component of a complex at least composed of URM1, CTU2/NCS2 and CTU1/ATPBD3. May form a heterodimer with CTU2/NCS2.

The protein localises to the cytoplasm. The protein operates within tRNA modification; 5-methoxycarbonylmethyl-2-thiouridine-tRNA biosynthesis. Its function is as follows. Plays a central role in 2-thiolation of mcm(5)S(2)U at tRNA wobble positions of tRNA(Lys), tRNA(Glu) and tRNA(Gln). Directly binds tRNAs and probably acts by catalyzing adenylation of tRNAs, an intermediate required for 2-thiolation. It is unclear whether it acts as a sulfurtransferase that transfers sulfur from thiocarboxylated URM1 onto the uridine of tRNAs at wobble position. In Bos taurus (Bovine), this protein is Cytoplasmic tRNA 2-thiolation protein 1.